The chain runs to 31 residues: Cytochrome b6-f complex subunit 6 (31 aa).

Residues 4 to 26 (IVSYFGFLLTASTITPALFIGLS) traverse the membrane as a helical segment.

Belongs to the PetL family. As to quaternary structure, the 4 large subunits of the cytochrome b6-f complex are cytochrome b6, subunit IV (17 kDa polypeptide, PetD), cytochrome f and the Rieske protein, while the 4 small subunits are PetG, PetL, PetM and PetN. The complex functions as a dimer.

The protein resides in the plastid. It is found in the chloroplast thylakoid membrane. Component of the cytochrome b6-f complex, which mediates electron transfer between photosystem II (PSII) and photosystem I (PSI), cyclic electron flow around PSI, and state transitions. PetL is important for photoautotrophic growth as well as for electron transfer efficiency and stability of the cytochrome b6-f complex. This Nymphaea alba (White water-lily) protein is Cytochrome b6-f complex subunit 6.